A 242-amino-acid chain; its full sequence is MKVMECQTYEELSQIAARITADTIKEKPDAVLGLATGGTPEGTYRQLIRLHQTENLSFQNITTVNLDEYAGLSSDDPNSYHFYMNDRFFQHIDSKPSRHFIPNGNADDLEAECRRYEQLVDSLGDTDIQLLGIGRNGHIGFNEPGTSFKSRTHVVTLNEQTRQANARYFPSIDSVPKKALTMGIQTILSSKRILLLISGKSKAEAVRKLLEGNISEDFPASALHLHSDVTVLIDREAASLRP.

The beta-D-fructose 6-phosphate site is built by T36, G38, T39, and D67. The Proton acceptor; for enolization step role is filled by D67. Catalysis depends on N136, which acts as the For ring-opening step. Beta-D-fructose 6-phosphate-binding residues include H138 and G140. H138 acts as the Proton acceptor; for ring-opening step in catalysis. E143 functions as the For ring-opening step in the catalytic mechanism. R167 and K202 together coordinate beta-D-fructose 6-phosphate.

Belongs to the glucosamine/galactosamine-6-phosphate isomerase family. NagB subfamily. In terms of assembly, monomer.

The enzyme catalyses alpha-D-glucosamine 6-phosphate + H2O = beta-D-fructose 6-phosphate + NH4(+). It functions in the pathway amino-sugar metabolism; N-acetylneuraminate degradation; D-fructose 6-phosphate from N-acetylneuraminate: step 5/5. Activity decreases at high substrate concentrations, which may reflect substrate inhibition. Unlike the E.coli enzyme, is not regulated by an allosteric mechanism. In terms of biological role, catalyzes the reversible isomerization-deamination of glucosamine 6-phosphate (GlcN6P) to form fructose 6-phosphate (Fru6P) and ammonium ion. This chain is Glucosamine-6-phosphate deaminase 1 (nagB), found in Bacillus subtilis (strain 168).